Reading from the N-terminus, the 428-residue chain is Ribosome biogenesis protein WDR12 homolog (428 aa).

The tract at residues 13–97 is ubiquitin-like (UBL) domain; sequence LQVHFTTKQK…EDTIELEYVE (85 aa). WD repeat units follow at residues 109–146, 148–190, 197–236, 259–297, 299–338, 344–384, and 388–426; these read LHDDWVSAVQAKDGWILTGTYDNTVNLWNTKGKHKLTI, GHVA…NTAE, GHERGVGCIAVNPAKTQMASGSMDTMLKIWSTELQADKGE, GHREFVSGVQWIDNTTIATCSWDHTIKLWDLSMGGIKTE, TGNKSFFDLSYSPLNGMIITASPDKNLRLYDPRSKHGNFV, GHSQ…APIF, and GHEDKVLACDWSNPKYILSGGSDNAVRVFKSRIAVDNTK.

Belongs to the WD repeat WDR12/YTM1 family.

It localises to the nucleus. The protein localises to the nucleolus. It is found in the nucleoplasm. In terms of biological role, required for maturation of ribosomal RNAs and formation of the large ribosomal subunit. The protein is Ribosome biogenesis protein WDR12 homolog of Anopheles gambiae (African malaria mosquito).